We begin with the raw amino-acid sequence, 424 residues long: WD-40 repeat-containing protein MSI3 (424 aa).

Methionine 1 is subject to N-acetylmethionine. 5 WD repeats span residues 167–207 (GHEQ…TDKV), 216–256 (GHQS…MQHQ), 259–299 (VHER…APLH), 303–343 (KHEG…DEQL), and 362–402 (GHKA…YRED). Positions 233–249 (IFGSAGDDCQLVIWDLR) match the DWD box motif. Residues 394–424 (MAESIYREDDEDEDDDDEGNQNAQHSNENQK) form a disordered region. A compositionally biased stretch (acidic residues) spans 401–412 (EDDEDEDDDDEG). Positions 413 to 424 (NQNAQHSNENQK) are enriched in polar residues.

The protein belongs to the WD repeat RBAP46/RBAP48/MSI1 family.

Its subcellular location is the nucleus. In terms of biological role, core histone-binding subunit that may target chromatin assembly factors, chromatin remodeling factors and histone deacetylases to their histone substrates in a manner that is regulated by nucleosomal DNA. The protein is WD-40 repeat-containing protein MSI3 (MSI3) of Arabidopsis thaliana (Mouse-ear cress).